The chain runs to 191 residues: Peptidyl-tRNA hydrolase (191 aa).

Tyr17 provides a ligand contact to tRNA. Catalysis depends on His22, which acts as the Proton acceptor. Residues Tyr68, Asn70, and Asn116 each contribute to the tRNA site.

The protein belongs to the PTH family. As to quaternary structure, monomer.

The protein resides in the cytoplasm. The enzyme catalyses an N-acyl-L-alpha-aminoacyl-tRNA + H2O = an N-acyl-L-amino acid + a tRNA + H(+). Hydrolyzes ribosome-free peptidyl-tRNAs (with 1 or more amino acids incorporated), which drop off the ribosome during protein synthesis, or as a result of ribosome stalling. Its function is as follows. Catalyzes the release of premature peptidyl moieties from peptidyl-tRNA molecules trapped in stalled 50S ribosomal subunits, and thus maintains levels of free tRNAs and 50S ribosomes. The sequence is that of Peptidyl-tRNA hydrolase from Mycobacterium avium (strain 104).